Here is a 329-residue protein sequence, read N- to C-terminus: Cytosolic sulfotransferase 6 (329 aa).

74–79 (KCGTTW) provides a ligand contact to 3'-phosphoadenylyl sulfate. H140 (proton acceptor) is an active-site residue. Residues R162, S170, and 295-297 (RKG) each bind 3'-phosphoadenylyl sulfate.

This sequence belongs to the sulfotransferase 1 family.

The protein resides in the cytoplasm. Its function is as follows. Sulfotransferase that utilizes 3'-phospho-5'-adenylyl sulfate (PAPS) as sulfonate donor. The chain is Cytosolic sulfotransferase 6 (SOT6) from Arabidopsis thaliana (Mouse-ear cress).